A 379-amino-acid polypeptide reads, in one-letter code: MLKVIVETKTLVQALGFASSVVEKRNIISELANIKLLAKDGLLELSSTNMDLYLSQKIGVQVVSEGELTVSTKTLNDIVKKLPDSELTLTDLGTTGLEITGKNCRFNLFTLPVESFPVMDNINPEASFKISCAEFAKIIESTKFSVSLDETRYNLNGIYLHVKDSEFYAASTDGHRLSVSSVVLAEKIEDFGVILPQKSAEEILKIVKDSKNANADIEILLSSNKIKFICNENVIMLSKLIDGTFPDYSSFIPENSSSKLVINRKIFADTIERIAIITVEKFRAVKLSLSGEALEISAIGEARGNAKEVINSSKETENFYEYSGETNLDIGFNPQYLEDVLKAIKSDLVELYFSSVSAPVLIKFPESPKDIFVVMPVKV.

It belongs to the beta sliding clamp family. As to quaternary structure, forms a ring-shaped head-to-tail homodimer around DNA which binds and tethers DNA polymerases and other proteins to the DNA. The DNA replisome complex has a single clamp-loading complex (3 tau and 1 each of delta, delta', psi and chi subunits) which binds 3 Pol III cores (1 core on the leading strand and 2 on the lagging strand) each with a beta sliding clamp dimer. Additional proteins in the replisome are other copies of gamma, psi and chi, Ssb, DNA helicase and RNA primase.

The protein resides in the cytoplasm. In terms of biological role, confers DNA tethering and processivity to DNA polymerases and other proteins. Acts as a clamp, forming a ring around DNA (a reaction catalyzed by the clamp-loading complex) which diffuses in an ATP-independent manner freely and bidirectionally along dsDNA. Initially characterized for its ability to contact the catalytic subunit of DNA polymerase III (Pol III), a complex, multichain enzyme responsible for most of the replicative synthesis in bacteria; Pol III exhibits 3'-5' exonuclease proofreading activity. The beta chain is required for initiation of replication as well as for processivity of DNA replication. The protein is Beta sliding clamp (dnaN) of Rickettsia bellii (strain RML369-C).